The primary structure comprises 545 residues: CTP synthase (545 aa).

An amidoligase domain region spans residues 1–266 (MTTRYIFVTG…DDLVIKRFNL (266 aa)). Ser-14 is a CTP binding site. Ser-14 contributes to the UTP binding site. ATP-binding positions include 15-20 (SLGKGI) and Asp-72. Residues Asp-72 and Glu-140 each contribute to the Mg(2+) site. Residues 147–149 (DIE), 187–192 (KTKPTQ), and Lys-223 each bind CTP. Residues 187–192 (KTKPTQ) and Lys-223 each bind UTP. 239-241 (KDV) is a binding site for ATP. The region spanning 291–542 (TIGMVGKYIE…IAASYAYQKR (252 aa)) is the Glutamine amidotransferase type-1 domain. Gly-352 serves as a coordination point for L-glutamine. The active-site Nucleophile; for glutamine hydrolysis is the Cys-379. L-glutamine is bound by residues 380-383 (LGMQ), Glu-403, and Arg-470. Residues His-515 and Glu-517 contribute to the active site.

It belongs to the CTP synthase family. In terms of assembly, homotetramer.

It carries out the reaction UTP + L-glutamine + ATP + H2O = CTP + L-glutamate + ADP + phosphate + 2 H(+). The catalysed reaction is L-glutamine + H2O = L-glutamate + NH4(+). It catalyses the reaction UTP + NH4(+) + ATP = CTP + ADP + phosphate + 2 H(+). It functions in the pathway pyrimidine metabolism; CTP biosynthesis via de novo pathway; CTP from UDP: step 2/2. Allosterically activated by GTP, when glutamine is the substrate; GTP has no effect on the reaction when ammonia is the substrate. The allosteric effector GTP functions by stabilizing the protein conformation that binds the tetrahedral intermediate(s) formed during glutamine hydrolysis. Inhibited by the product CTP, via allosteric rather than competitive inhibition. In terms of biological role, catalyzes the ATP-dependent amination of UTP to CTP with either L-glutamine or ammonia as the source of nitrogen. Regulates intracellular CTP levels through interactions with the four ribonucleotide triphosphates. This is CTP synthase from Shewanella frigidimarina (strain NCIMB 400).